Reading from the N-terminus, the 130-residue chain is Small ribosomal subunit protein bS6 (130 aa).

Positions 100 to 130 (SPMVKAKDERRERREDFAEAGDDVDAGDSEE) are disordered. Basic and acidic residues predominate over residues 104–116 (KAKDERRERREDF). Residues 117–130 (AEAGDDVDAGDSEE) are compositionally biased toward acidic residues.

It belongs to the bacterial ribosomal protein bS6 family.

Functionally, binds together with bS18 to 16S ribosomal RNA. This chain is Small ribosomal subunit protein bS6, found in Pectobacterium carotovorum subsp. carotovorum (strain PC1).